Here is a 286-residue protein sequence, read N- to C-terminus: ATP synthase gamma chain (286 aa).

This sequence belongs to the ATPase gamma chain family. As to quaternary structure, F-type ATPases have 2 components, CF(1) - the catalytic core - and CF(0) - the membrane proton channel. CF(1) has five subunits: alpha(3), beta(3), gamma(1), delta(1), epsilon(1). CF(0) has three main subunits: a, b and c.

Its subcellular location is the cell membrane. Functionally, produces ATP from ADP in the presence of a proton gradient across the membrane. The gamma chain is believed to be important in regulating ATPase activity and the flow of protons through the CF(0) complex. In Bacillus anthracis (strain A0248), this protein is ATP synthase gamma chain.